Here is a 215-residue protein sequence, read N- to C-terminus: MRSIASKKLVIATHNTGKLHEITTLVAPFGLEIQSAKELDLPEPKETGVTFEENAYIKAFAAAKNTGLPALSDDSGLEVDALGGAPGVYTADWALQSDGTRNFSKAMQKIEDELQKIGAHEKSQRKARFISVICIAWSDAYADYFRGSVEGTFIWPPRGDKGFGFDPIFLPDGYENTFGEMSTEQKHGWKLNDKTPLSHRARAFKLLAENLLTLS.

13-18 is a binding site for substrate; the sequence is THNTGK. D74 (proton acceptor) is an active-site residue. D74 contributes to the Mg(2+) binding site. Substrate is bound by residues S75, 163–166, K186, and 199–200; these read FGFD and HR.

This sequence belongs to the HAM1 NTPase family. As to quaternary structure, homodimer. Requires Mg(2+) as cofactor.

The catalysed reaction is XTP + H2O = XMP + diphosphate + H(+). It catalyses the reaction dITP + H2O = dIMP + diphosphate + H(+). It carries out the reaction ITP + H2O = IMP + diphosphate + H(+). Its function is as follows. Pyrophosphatase that catalyzes the hydrolysis of nucleoside triphosphates to their monophosphate derivatives, with a high preference for the non-canonical purine nucleotides XTP (xanthosine triphosphate), dITP (deoxyinosine triphosphate) and ITP. Seems to function as a house-cleaning enzyme that removes non-canonical purine nucleotides from the nucleotide pool, thus preventing their incorporation into DNA/RNA and avoiding chromosomal lesions. This Bartonella quintana (strain Toulouse) (Rochalimaea quintana) protein is dITP/XTP pyrophosphatase.